The sequence spans 626 residues: Basic helix-loop-helix ARNT-like protein 1 (626 aa).

The tract at residues 1–58 (MADQRMDISSTISDFMSPGPTDLLSGSLSTSGVDCNRKRKGSATDYQESMDTDKDDPH) is disordered. S17 bears the Phosphoserine; by GSK3-beta mark. The span at 17-32 (SPGPTDLLSGSLSTSG) shows a compositional bias: low complexity. At T21 the chain carries Phosphothreonine; by GSK3-beta. A Nuclear localization signal motif is present at residues 36–41 (NRKRKG). The 54-residue stretch at 72–125 (NAREAHSQIEKRRRDKMNSFIDELASLVPTCNAMSRKLDKLTVLRMAVQHMKTL) folds into the bHLH domain. S78 carries the phosphoserine modification. S90 is modified (phosphoserine; by CK2). Residues 142 to 152 (LSDDELKHLIL) carry the Nuclear export signal 1 motif. Residues 143–215 (SDDELKHLIL…EQLSSSDTAP (73 aa)) enclose the PAS 1 domain. Residue K252 forms a Glycyl lysine isopeptide (Lys-Gly) (interchain with G-Cter in SUMO2 and SUMO3) linkage. K259 is covalently cross-linked (Glycyl lysine isopeptide (Lys-Gly) (interchain with G-Cter in SUMO); alternate). A Glycyl lysine isopeptide (Lys-Gly) (interchain with G-Cter in SUMO2); alternate cross-link involves residue K259. The PAS 2 domain maps to 326 to 396 (PQPVNGEIRV…ECHRQVLQTR (71 aa)). Positions 361–369 (LAYLPQELL) match the Nuclear export signal 2 motif. Residues 401–444 (TNCYKFKIKDGSFITLRSRWFSFMNPWTKEVEYIVSTNTVVLAN) enclose the PAC domain. 2 disordered regions span residues 459–492 (SPHSMDSMLPSGEGGPKRTHPTVPGIPGGTRAGA) and 511–595 (GSSP…SPSN). The segment at 508 to 588 (RIRGSSPSSC…IGIDMIDNDQ (81 aa)) is interaction with CIART. Positions 511-521 (GSSPSSCGSSP) are enriched in low complexity. Position 538 is an N6-acetyllysine (K538).

As to quaternary structure, component of the circadian clock oscillator which includes the CRY1/2 proteins, CLOCK or NPAS2, BMAL1 or BMAL2, CSNK1D and/or CSNK1E, TIMELESS and the PER1/2/3 proteins. Forms a heterodimer with CLOCK. The CLOCK-BMAL1 heterodimer is required for E-box-dependent transactivation, for CLOCK nuclear translocation and degradation, and, for phosphorylation of both CLOCK and BMAL1. Part of a nuclear complex which also includes RACK1 and PRKCA; RACK1 and PRKCA are recruited to the complex in a circadian manner. Interacts with NPAS2. Interacts with EZH2. Interacts with SUMO3. Interacts with SIRT1. Interacts with AHR. Interacts with ID1, ID2 and ID3. Interacts with DDX4. Interacts with OGT. Interacts with EED and SUZ12. Interacts with MTA1. Interacts with CIART. Interacts with HSP90. Interacts with KAT2B and EP300. Interacts with BHLHE40/DEC1 and BHLHE41/DEC2. Interacts with RELB and the interaction is enhanced in the presence of CLOCK. Interacts with PER1, PER2, CRY1 and CRY2 and this interaction requires a translocation to the nucleus. Interaction of the CLOCK-BMAL1 heterodimer with PER or CRY inhibits transcription activation. Interaction of the CLOCK-BMAL1 with CRY1 is independent of DNA but with PER2 is off DNA. The CLOCK-BMAL1 heterodimer interacts with GSK3B. Interacts with KDM5A. Interacts with KMT2A; in a circadian manner. Interacts with UBE3A. Interacts with PRKCG. Interacts with MAGEL2. Interacts with NCOA2. Interacts with THRAP3. The CLOCK-BMAL1 heterodimer interacts with PASD1. Interacts with PASD1. Interacts with USP9X. Interacts with PIWIL2 (via PIWI domain). Interacts with HDAC3. Interacts with HNF4A. In terms of processing, ubiquitinated, leading to its proteasomal degradation. Deubiquitinated by USP9X. Post-translationally, O-glycosylated; contains O-GlcNAc. O-glycosylation by OGT prevents protein degradation by inhibiting ubiquitination. It also stabilizes the CLOCK-BMAL1 heterodimer thereby increasing CLOCK-BMAL1-mediated transcription of genes in the negative loop of the circadian clock such as PER1/2/3 and CRY1/2. Acetylated on Lys-538 by CLOCK during the repression phase of the circadian cycle. Acetylation facilitates recruitment of CRY1 protein and initiates the repression phase of the circadian cycle. Acetylated at Lys-538 by KAT5 during the activation phase of the cycle, leading to recruitment of the positive transcription elongation factor b (P-TEFb) and BRD4, followed by productive elongation of circadian transcripts. Deacetylated by SIRT1, which may result in decreased protein stability. In terms of processing, phosphorylated upon dimerization with CLOCK. Phosphorylation enhances the transcriptional activity, alters the subcellular localization and decreases the stability of the CLOCK-BMAL1 heterodimer by promoting its degradation. Phosphorylation shows circadian variations in the liver with a peak between CT10 to CT14. Phosphorylation at Ser-90 by CK2 is essential for its nuclear localization, its interaction with CLOCK and controls CLOCK nuclear entry. Dephosphorylation at Ser-78 is important for dimerization with CLOCK and transcriptional activity. Post-translationally, sumoylated on Lys-259 upon dimerization with CLOCK. Predominantly conjugated to poly-SUMO2/3 rather than SUMO1 and the level of these conjugates undergo rhythmic variation, peaking at CT9-CT12. Sumoylation localizes it exclusively to the PML body and promotes its ubiquitination in the PML body, ubiquitin-dependent proteasomal degradation and the transcriptional activity of the CLOCK-BMAL1 heterodimer. Undergoes lysosome-mediated degradation in a time-dependent manner in the liver.

The protein resides in the nucleus. It is found in the cytoplasm. The protein localises to the PML body. Its function is as follows. Transcriptional activator which forms a core component of the circadian clock. The circadian clock, an internal time-keeping system, regulates various physiological processes through the generation of approximately 24 hour circadian rhythms in gene expression, which are translated into rhythms in metabolism and behavior. It is derived from the Latin roots 'circa' (about) and 'diem' (day) and acts as an important regulator of a wide array of physiological functions including metabolism, sleep, body temperature, blood pressure, endocrine, immune, cardiovascular, and renal function. Consists of two major components: the central clock, residing in the suprachiasmatic nucleus (SCN) of the brain, and the peripheral clocks that are present in nearly every tissue and organ system. Both the central and peripheral clocks can be reset by environmental cues, also known as Zeitgebers (German for 'timegivers'). The predominant Zeitgeber for the central clock is light, which is sensed by retina and signals directly to the SCN. The central clock entrains the peripheral clocks through neuronal and hormonal signals, body temperature and feeding-related cues, aligning all clocks with the external light/dark cycle. Circadian rhythms allow an organism to achieve temporal homeostasis with its environment at the molecular level by regulating gene expression to create a peak of protein expression once every 24 hours to control when a particular physiological process is most active with respect to the solar day. Transcription and translation of core clock components (CLOCK, NPAS2, BMAL1, BMAL2, PER1, PER2, PER3, CRY1 and CRY2) plays a critical role in rhythm generation, whereas delays imposed by post-translational modifications (PTMs) are important for determining the period (tau) of the rhythms (tau refers to the period of a rhythm and is the length, in time, of one complete cycle). A diurnal rhythm is synchronized with the day/night cycle, while the ultradian and infradian rhythms have a period shorter and longer than 24 hours, respectively. Disruptions in the circadian rhythms contribute to the pathology of cardiovascular diseases, cancer, metabolic syndromes and aging. A transcription/translation feedback loop (TTFL) forms the core of the molecular circadian clock mechanism. Transcription factors, CLOCK or NPAS2 and BMAL1 or BMAL2, form the positive limb of the feedback loop, act in the form of a heterodimer and activate the transcription of core clock genes and clock-controlled genes (involved in key metabolic processes), harboring E-box elements (5'-CACGTG-3') within their promoters. The core clock genes: PER1/2/3 and CRY1/2 which are transcriptional repressors form the negative limb of the feedback loop and interact with the CLOCK|NPAS2-BMAL1|BMAL2 heterodimer inhibiting its activity and thereby negatively regulating their own expression. This heterodimer also activates nuclear receptors NR1D1/2 and RORA/B/G, which form a second feedback loop and which activate and repress BMAL1 transcription, respectively. BMAL1 positively regulates myogenesis and negatively regulates adipogenesis via the transcriptional control of the genes of the canonical Wnt signaling pathway. Plays a role in normal pancreatic beta-cell function; regulates glucose-stimulated insulin secretion via the regulation of antioxidant genes NFE2L2/NRF2 and its targets SESN2, PRDX3, CCLC and CCLM. Negatively regulates the mTORC1 signaling pathway; regulates the expression of MTOR and DEPTOR. Controls diurnal oscillations of Ly6C inflammatory monocytes; rhythmic recruitment of the PRC2 complex imparts diurnal variation to chemokine expression that is necessary to sustain Ly6C monocyte rhythms. Regulates the expression of HSD3B2, STAR, PTGS2, CYP11A1, CYP19A1 and LHCGR in the ovary and also the genes involved in hair growth. Plays an important role in adult hippocampal neurogenesis by regulating the timely entry of neural stem/progenitor cells (NSPCs) into the cell cycle and the number of cell divisions that take place prior to cell-cycle exit. Regulates the circadian expression of CIART and KLF11. The CLOCK-BMAL1 heterodimer regulates the circadian expression of SERPINE1/PAI1, VWF, B3, CCRN4L/NOC, NAMPT, DBP, MYOD1, PPARGC1A, PPARGC1B, SIRT1, GYS2, F7, NGFR, GNRHR, BHLHE40/DEC1, ATF4, MTA1, KLF10 and also genes implicated in glucose and lipid metabolism. Promotes rhythmic chromatin opening, regulating the DNA accessibility of other transcription factors. May play a role in spermatogenesis; contributes to the chromatoid body assembly and physiology. The NPAS2-BMAL1 heterodimer positively regulates the expression of MAOA, F7 and LDHA and modulates the circadian rhythm of daytime contrast sensitivity by regulating the rhythmic expression of adenylate cyclase type 1 (ADCY1) in the retina. The preferred binding motif for the CLOCK-BMAL1 heterodimer is 5'-CACGTGA-3', which contains a flanking adenine nucleotide at the 3-prime end of the canonical 6-nucleotide E-box sequence. CLOCK specifically binds to the half-site 5'-CAC-3', while BMAL1 binds to the half-site 5'-GTGA-3'. The CLOCK-BMAL1 heterodimer also recognizes the non-canonical E-box motifs 5'-AACGTGA-3' and 5'-CATGTGA-3'. Essential for the rhythmic interaction of CLOCK with ASS1 and plays a critical role in positively regulating CLOCK-mediated acetylation of ASS1. Plays a role in protecting against lethal sepsis by limiting the expression of immune checkpoint protein CD274 in macrophages in a PKM2-dependent manner. Regulates the diurnal rhythms of skeletal muscle metabolism via transcriptional activation of genes promoting triglyceride synthesis (DGAT2) and metabolic efficiency (COQ10B). The sequence is that of Basic helix-loop-helix ARNT-like protein 1 from Rattus norvegicus (Rat).